The primary structure comprises 294 residues: Ribosomal RNA small subunit methyltransferase A (294 aa).

Positions 31, 33, 58, 79, 111, and 136 each coordinate S-adenosyl-L-methionine.

This sequence belongs to the class I-like SAM-binding methyltransferase superfamily. rRNA adenine N(6)-methyltransferase family. RsmA subfamily.

It localises to the cytoplasm. It catalyses the reaction adenosine(1518)/adenosine(1519) in 16S rRNA + 4 S-adenosyl-L-methionine = N(6)-dimethyladenosine(1518)/N(6)-dimethyladenosine(1519) in 16S rRNA + 4 S-adenosyl-L-homocysteine + 4 H(+). Specifically dimethylates two adjacent adenosines (A1518 and A1519) in the loop of a conserved hairpin near the 3'-end of 16S rRNA in the 30S particle. May play a critical role in biogenesis of 30S subunits. The sequence is that of Ribosomal RNA small subunit methyltransferase A from Lactobacillus acidophilus (strain ATCC 700396 / NCK56 / N2 / NCFM).